A 258-amino-acid chain; its full sequence is Thrombin-like enzyme CPI-enzyme 2 (258 aa).

Positions 1 to 18 (MVLIRVLANLLILQLSYA) are cleaved as a signal peptide. Positions 19–24 (QKSSEL) are excised as a propeptide. Residues 25 to 249 (VIGGDECNIN…YTDWIENIIA (225 aa)) enclose the Peptidase S1 domain. Intrachain disulfides connect Cys-31–Cys-163, Cys-50–Cys-66, Cys-98–Cys-256, Cys-142–Cys-210, Cys-174–Cys-189, and Cys-200–Cys-225. The N-linked (GlcNAc...) asparagine glycan is linked to Asn-44. The active-site Charge relay system is His-65. Residues Asn-79 and Asn-103 are each glycosylated (N-linked (GlcNAc...) asparagine). Asp-110 functions as the Charge relay system in the catalytic mechanism. Residue Asn-121 is glycosylated (N-linked (GlcNAc...) asparagine). The active-site Charge relay system is the Ser-204.

The protein belongs to the peptidase S1 family. Snake venom subfamily. As to quaternary structure, monomer. In terms of processing, N-glycosylated. As to expression, expressed by the venom gland.

The protein localises to the secreted. In terms of biological role, thrombin-like snake venom serine protease that cleaves fibrinogen beta (FGB) releasing fibrinopeptide B. Promotes capillary permeability-increasing activity through the release of peptides from the beta-chain of fibrinogen. The chain is Thrombin-like enzyme CPI-enzyme 2 from Gloydius ussuriensis (Ussuri mamushi).